Consider the following 544-residue polypeptide: Chaperonin GroEL (544 aa).

ATP is bound by residues T30–P33, K51, D87–T91, G415, and D495.

This sequence belongs to the chaperonin (HSP60) family. Forms a cylinder of 14 subunits composed of two heptameric rings stacked back-to-back. Interacts with the co-chaperonin GroES.

It is found in the cytoplasm. The enzyme catalyses ATP + H2O + a folded polypeptide = ADP + phosphate + an unfolded polypeptide.. Its function is as follows. Together with its co-chaperonin GroES, plays an essential role in assisting protein folding. The GroEL-GroES system forms a nano-cage that allows encapsulation of the non-native substrate proteins and provides a physical environment optimized to promote and accelerate protein folding. The chain is Chaperonin GroEL from Methylobacillus flagellatus (strain ATCC 51484 / DSM 6875 / VKM B-1610 / KT).